Consider the following 91-residue polypeptide: Small ribosomal subunit protein uS19 (91 aa).

This sequence belongs to the universal ribosomal protein uS19 family.

Functionally, protein S19 forms a complex with S13 that binds strongly to the 16S ribosomal RNA. This chain is Small ribosomal subunit protein uS19, found in Lachnospira eligens (strain ATCC 27750 / DSM 3376 / VPI C15-48 / C15-B4) (Eubacterium eligens).